The following is a 168-amino-acid chain: Ribosome maturation factor RimM (168 aa).

A PRC barrel domain is found at 96-168; it reads EGDYYWTDLI…IIVVEWDADF (73 aa).

Belongs to the RimM family. In terms of assembly, binds ribosomal protein uS19.

It is found in the cytoplasm. An accessory protein needed during the final step in the assembly of 30S ribosomal subunit, possibly for assembly of the head region. Essential for efficient processing of 16S rRNA. May be needed both before and after RbfA during the maturation of 16S rRNA. It has affinity for free ribosomal 30S subunits but not for 70S ribosomes. This is Ribosome maturation factor RimM from Coxiella burnetii (strain Dugway 5J108-111).